The following is a 147-amino-acid chain: D-aminoacyl-tRNA deacylase (147 aa).

Positions 137–138 (GP) match the Gly-cisPro motif, important for rejection of L-amino acids motif.

It belongs to the DTD family. In terms of assembly, homodimer.

It localises to the cytoplasm. It carries out the reaction glycyl-tRNA(Ala) + H2O = tRNA(Ala) + glycine + H(+). It catalyses the reaction a D-aminoacyl-tRNA + H2O = a tRNA + a D-alpha-amino acid + H(+). Functionally, an aminoacyl-tRNA editing enzyme that deacylates mischarged D-aminoacyl-tRNAs. Also deacylates mischarged glycyl-tRNA(Ala), protecting cells against glycine mischarging by AlaRS. Acts via tRNA-based rather than protein-based catalysis; rejects L-amino acids rather than detecting D-amino acids in the active site. By recycling D-aminoacyl-tRNA to D-amino acids and free tRNA molecules, this enzyme counteracts the toxicity associated with the formation of D-aminoacyl-tRNA entities in vivo and helps enforce protein L-homochirality. This is D-aminoacyl-tRNA deacylase from Exiguobacterium sp. (strain ATCC BAA-1283 / AT1b).